The primary structure comprises 564 residues: Dihydroxy-acid dehydratase (564 aa).

Asp80 is a binding site for Mg(2+). Cys121 lines the [2Fe-2S] cluster pocket. Residues Asp122 and Lys123 each coordinate Mg(2+). Lys123 carries the post-translational modification N6-carboxylysine. Cys194 contributes to the [2Fe-2S] cluster binding site. Glu447 contacts Mg(2+). The Proton acceptor role is filled by Ser473.

The protein belongs to the IlvD/Edd family. Homodimer. It depends on [2Fe-2S] cluster as a cofactor. The cofactor is Mg(2+).

The catalysed reaction is (2R)-2,3-dihydroxy-3-methylbutanoate = 3-methyl-2-oxobutanoate + H2O. It carries out the reaction (2R,3R)-2,3-dihydroxy-3-methylpentanoate = (S)-3-methyl-2-oxopentanoate + H2O. The protein operates within amino-acid biosynthesis; L-isoleucine biosynthesis; L-isoleucine from 2-oxobutanoate: step 3/4. It participates in amino-acid biosynthesis; L-valine biosynthesis; L-valine from pyruvate: step 3/4. Its function is as follows. Functions in the biosynthesis of branched-chain amino acids. Catalyzes the dehydration of (2R,3R)-2,3-dihydroxy-3-methylpentanoate (2,3-dihydroxy-3-methylvalerate) into 2-oxo-3-methylpentanoate (2-oxo-3-methylvalerate) and of (2R)-2,3-dihydroxy-3-methylbutanoate (2,3-dihydroxyisovalerate) into 2-oxo-3-methylbutanoate (2-oxoisovalerate), the penultimate precursor to L-isoleucine and L-valine, respectively. This chain is Dihydroxy-acid dehydratase, found in Listeria innocua serovar 6a (strain ATCC BAA-680 / CLIP 11262).